Consider the following 836-residue polypeptide: Translation initiation factor IF-2 (836 aa).

Over residues 1–17 the composition is skewed to basic residues; the sequence is MLRLMRQKKLSIQRRTK. Disordered stretches follow at residues 1–43 and 83–240; these read MLRL…RTVK and AAKK…KGAA. Residues 18-27 show a composition bias toward low complexity; the sequence is TTVSSTTTGG. A compositionally biased stretch (basic and acidic residues) spans 83–153; it reads AAKKEADEKV…AAEEAKRYAE (71 aa). The segment covering 154–167 has biased composition (acidic residues); the sequence is ADDSDNESSSEDYS. Residues 192–202 show a composition bias toward basic residues; that stretch reads RGKNKVAKAKK. Residues 203 to 229 are compositionally biased toward basic and acidic residues; the sequence is GGRDDENSKNSKNERESNRKNQKDAKF. Residues 335–505 enclose the tr-type G domain; the sequence is TRAPVVTIMG…LLQSEVLELT (171 aa). A G1 region spans residues 344–351; sequence GHVDHGKT. 344–351 provides a ligand contact to GTP; sequence GHVDHGKT. The G2 stretch occupies residues 369 to 373; the sequence is GITQH. Residues 391 to 394 are G3; sequence DTPG. Residues 391 to 395 and 445 to 448 each bind GTP; these read DTPGH and NKID. Positions 445-448 are G4; sequence NKID. Residues 481–483 are G5; sequence SAK.

It belongs to the TRAFAC class translation factor GTPase superfamily. Classic translation factor GTPase family. IF-2 subfamily.

Its subcellular location is the cytoplasm. One of the essential components for the initiation of protein synthesis. Protects formylmethionyl-tRNA from spontaneous hydrolysis and promotes its binding to the 30S ribosomal subunits. Also involved in the hydrolysis of GTP during the formation of the 70S ribosomal complex. This is Translation initiation factor IF-2 from Haemophilus influenzae (strain PittEE).